The following is a 177-amino-acid chain: ATP synthase subunit delta (177 aa).

The protein belongs to the ATPase delta chain family. In terms of assembly, F-type ATPases have 2 components, F(1) - the catalytic core - and F(0) - the membrane proton channel. F(1) has five subunits: alpha(3), beta(3), gamma(1), delta(1), epsilon(1). F(0) has three main subunits: a(1), b(2) and c(10-14). The alpha and beta chains form an alternating ring which encloses part of the gamma chain. F(1) is attached to F(0) by a central stalk formed by the gamma and epsilon chains, while a peripheral stalk is formed by the delta and b chains.

It is found in the cell inner membrane. F(1)F(0) ATP synthase produces ATP from ADP in the presence of a proton or sodium gradient. F-type ATPases consist of two structural domains, F(1) containing the extramembraneous catalytic core and F(0) containing the membrane proton channel, linked together by a central stalk and a peripheral stalk. During catalysis, ATP synthesis in the catalytic domain of F(1) is coupled via a rotary mechanism of the central stalk subunits to proton translocation. In terms of biological role, this protein is part of the stalk that links CF(0) to CF(1). It either transmits conformational changes from CF(0) to CF(1) or is implicated in proton conduction. The polypeptide is ATP synthase subunit delta (Janthinobacterium sp. (strain Marseille) (Minibacterium massiliensis)).